The sequence spans 314 residues: tRNA-cytidine(32) 2-sulfurtransferase (314 aa).

Residues 46-51 (SGGKDS) carry the PP-loop motif motif. 3 residues coordinate [4Fe-4S] cluster: C121, C124, and C212.

The protein belongs to the TtcA family. In terms of assembly, homodimer. Mg(2+) serves as cofactor. It depends on [4Fe-4S] cluster as a cofactor.

It localises to the cytoplasm. The catalysed reaction is cytidine(32) in tRNA + S-sulfanyl-L-cysteinyl-[cysteine desulfurase] + AH2 + ATP = 2-thiocytidine(32) in tRNA + L-cysteinyl-[cysteine desulfurase] + A + AMP + diphosphate + H(+). The protein operates within tRNA modification. Its function is as follows. Catalyzes the ATP-dependent 2-thiolation of cytidine in position 32 of tRNA, to form 2-thiocytidine (s(2)C32). The sulfur atoms are provided by the cysteine/cysteine desulfurase (IscS) system. The polypeptide is tRNA-cytidine(32) 2-sulfurtransferase (Nitrosomonas europaea (strain ATCC 19718 / CIP 103999 / KCTC 2705 / NBRC 14298)).